Here is a 297-residue protein sequence, read N- to C-terminus: MTEITETAEAQAALLSAALPYMQRYENKTVVIKYGGHAMGDIALGRAFARDVALLKQSGVNPIVVHGGGPQIGDMLKRMGIESKFEGGLRVTDQKTVEIVEMVLAGSINKEIVALINAEGEWAIGLCGKDGNMVFAEKARKTVVDPDSNIERVLDLGFVGEPVEVDRTLLDLLARSEMIPVLAPVAPGRDGYTYNINADTFAGAIAGAVKASRLLFLTDVPGVLDRDKKLINELTVSQARALIKDGTISGGMIPKVETCIEAIQRGVEGVVILNGKTAHSVLLELFTEHGAGTLIVP.

Substrate is bound by residues 68 to 69, Arg-90, and Asn-195; that span reads GG.

The protein belongs to the acetylglutamate kinase family. ArgB subfamily.

The protein resides in the cytoplasm. It catalyses the reaction N-acetyl-L-glutamate + ATP = N-acetyl-L-glutamyl 5-phosphate + ADP. It functions in the pathway amino-acid biosynthesis; L-arginine biosynthesis; N(2)-acetyl-L-ornithine from L-glutamate: step 2/4. Functionally, catalyzes the ATP-dependent phosphorylation of N-acetyl-L-glutamate. The chain is Acetylglutamate kinase from Chelativorans sp. (strain BNC1).